The primary structure comprises 107 residues: MKNPLANLMQQAQRFQETFQKTQEEIAATEIQAESGGGLVKIRMNGKREVLKVEIDPSLRQEEHEVLEDLIAAAFNDGVRRVAKLKQEKMAGLTGSLGIPPGFNLPF.

It belongs to the YbaB/EbfC family. As to quaternary structure, homodimer.

It is found in the cytoplasm. The protein localises to the nucleoid. Binds to DNA and alters its conformation. May be involved in regulation of gene expression, nucleoid organization and DNA protection. In Methylococcus capsulatus (strain ATCC 33009 / NCIMB 11132 / Bath), this protein is Nucleoid-associated protein MCA1327.